The sequence spans 162 residues: Necrosis-inducing secreted protein 1 (162 aa).

The first 19 residues, 1–19 (MQFLTSLAAAASLVSLASA), serve as a signal peptide directing secretion. N-linked (GlcNAc...) asparagine glycans are attached at residues Asn-88, Asn-126, Asn-133, and Asn-150. A BAK1/SERK3-binding region spans residues 103 to 132 (EYVIAASLFSLYGASSSPTVSNYNVTVNVG).

This sequence belongs to the NIS1 effector family. As to quaternary structure, interacts with the host pattern recognition receptor (PRR)-associated kinases BAK1/SERK3, BKK1/SERK4 and BIK1.

The protein localises to the secreted. The protein resides in the host cytoplasm. Secreted effector that induces necrotic lesions in Nicotiana benthamiana. Interacts with the host receptor-like kinases (RLKs) BAK1/SERK3 and BKK1/SERK4, inhibits their kinase activity and suppresses INF1-induced pathogen-associated molecular pattern (PAMP)-triggered immunity (PTI) in N.benthamiana. Also interacts with the host receptor-like cytoplasmic kinase (RLCK) BIK1 and inhibits its kinase activity, thereby inhibiting PAMP-induced ROS generation. In PTI, phosphorylation relaying by RLKs and RLCKs is critical for the initiation of downstream signaling. This chain is Necrosis-inducing secreted protein 1, found in Colletotrichum orbiculare (strain 104-T / ATCC 96160 / CBS 514.97 / LARS 414 / MAFF 240422) (Cucumber anthracnose fungus).